The following is an 89-amino-acid chain: Small ribosomal subunit protein uS15 (89 aa).

It belongs to the universal ribosomal protein uS15 family. Part of the 30S ribosomal subunit. Forms a bridge to the 50S subunit in the 70S ribosome, contacting the 23S rRNA.

Its function is as follows. One of the primary rRNA binding proteins, it binds directly to 16S rRNA where it helps nucleate assembly of the platform of the 30S subunit by binding and bridging several RNA helices of the 16S rRNA. Forms an intersubunit bridge (bridge B4) with the 23S rRNA of the 50S subunit in the ribosome. The polypeptide is Small ribosomal subunit protein uS15 (Kocuria rhizophila (strain ATCC 9341 / DSM 348 / NBRC 103217 / DC2201)).